A 307-amino-acid polypeptide reads, in one-letter code: Porphobilinogen deaminase (307 aa).

Cysteine 239 carries the S-(dipyrrolylmethanemethyl)cysteine modification.

Belongs to the HMBS family. In terms of assembly, monomer. It depends on dipyrromethane as a cofactor.

It catalyses the reaction 4 porphobilinogen + H2O = hydroxymethylbilane + 4 NH4(+). Its pathway is porphyrin-containing compound metabolism; protoporphyrin-IX biosynthesis; coproporphyrinogen-III from 5-aminolevulinate: step 2/4. Tetrapolymerization of the monopyrrole PBG into the hydroxymethylbilane pre-uroporphyrinogen in several discrete steps. In Campylobacter jejuni subsp. jejuni serotype O:23/36 (strain 81-176), this protein is Porphobilinogen deaminase.